The sequence spans 393 residues: Pyridoxamine--pyruvate transaminase (393 aa).

Pyridoxal 5'-phosphate is bound by residues glutamate 68, tyrosine 95, and threonine 146. Lysine 197 carries the N6-(pyridoxal phosphate)lysine modification. A pyridoxal 5'-phosphate-binding site is contributed by arginine 345.

Belongs to the class-V pyridoxal-phosphate-dependent aminotransferase family. Homotetramer. Pyridoxal 5'-phosphate serves as cofactor.

It carries out the reaction pyridoxamine + pyruvate = pyridoxal + L-alanine. In terms of biological role, catalyzes a reversible transamination reaction between pyridoxamine and pyruvate to form pyridoxal and L-alanine. The sequence is that of Pyridoxamine--pyruvate transaminase (ppaT) from Mesorhizobium japonicum (strain LMG 29417 / CECT 9101 / MAFF 303099) (Mesorhizobium loti (strain MAFF 303099)).